The chain runs to 193 residues: Flagellar transcriptional regulator FlhC (193 aa).

4 residues coordinate Zn(2+): C138, C141, C158, and C161.

It belongs to the FlhC family. As to quaternary structure, heterohexamer composed of two FlhC and four FlhD subunits. Each FlhC binds a FlhD dimer, forming a heterotrimer, and a hexamer assembles by dimerization of two heterotrimers. Zn(2+) serves as cofactor.

It localises to the cytoplasm. Its function is as follows. Functions in complex with FlhD as a master transcriptional regulator that regulates transcription of several flagellar and non-flagellar operons by binding to their promoter region. Activates expression of class 2 flagellar genes, including fliA, which is a flagellum-specific sigma factor that turns on the class 3 genes. Also regulates genes whose products function in a variety of physiological pathways. The protein is Flagellar transcriptional regulator FlhC of Yersinia enterocolitica.